We begin with the raw amino-acid sequence, 397 residues long: Argininosuccinate synthase (397 aa).

Residue 8–16 (AYSGGLDTS) coordinates ATP. Residues tyrosine 86 and serine 91 each contribute to the L-citrulline site. Glycine 116 contributes to the ATP binding site. The L-aspartate site is built by threonine 118, asparagine 122, and aspartate 123. Asparagine 122 is an L-citrulline binding site. L-citrulline contacts are provided by arginine 126, serine 175, serine 184, glutamate 260, and tyrosine 272.

Belongs to the argininosuccinate synthase family. Type 1 subfamily. Homotetramer.

The protein localises to the cytoplasm. The enzyme catalyses L-citrulline + L-aspartate + ATP = 2-(N(omega)-L-arginino)succinate + AMP + diphosphate + H(+). It participates in amino-acid biosynthesis; L-arginine biosynthesis; L-arginine from L-ornithine and carbamoyl phosphate: step 2/3. This Clostridium botulinum (strain Langeland / NCTC 10281 / Type F) protein is Argininosuccinate synthase.